Here is a 296-residue protein sequence, read N- to C-terminus: 4-hydroxy-tetrahydrodipicolinate synthase (296 aa).

Residue Thr-49 coordinates pyruvate. Tyr-137 functions as the Proton donor/acceptor in the catalytic mechanism. Lys-166 acts as the Schiff-base intermediate with substrate in catalysis. Ile-208 lines the pyruvate pocket.

The protein belongs to the DapA family. As to quaternary structure, homotetramer; dimer of dimers.

It localises to the cytoplasm. It carries out the reaction L-aspartate 4-semialdehyde + pyruvate = (2S,4S)-4-hydroxy-2,3,4,5-tetrahydrodipicolinate + H2O + H(+). The protein operates within amino-acid biosynthesis; L-lysine biosynthesis via DAP pathway; (S)-tetrahydrodipicolinate from L-aspartate: step 3/4. Catalyzes the condensation of (S)-aspartate-beta-semialdehyde [(S)-ASA] and pyruvate to 4-hydroxy-tetrahydrodipicolinate (HTPA). This chain is 4-hydroxy-tetrahydrodipicolinate synthase, found in Chlorobium phaeovibrioides (strain DSM 265 / 1930) (Prosthecochloris vibrioformis (strain DSM 265)).